The chain runs to 557 residues: Potassium-transporting ATPase potassium-binding subunit (557 aa).

12 helical membrane passes run 5–25 (GFLL…PLGS), 63–83 (LSAI…MLLG), 132–152 (GLTV…FAFI), 170–190 (LLRI…LFFI), 253–273 (FVQM…FGEV), 283–303 (LLWA…WAEV), 329–349 (VLVS…AVIA), 356–376 (ALGG…FGGV), 379–399 (GLYG…LMIG), 416–436 (LTAL…ALAM), 484–504 (LLAF…MAIA), and 526–546 (LFVG…FIPA).

The protein belongs to the KdpA family. As to quaternary structure, the system is composed of three essential subunits: KdpA, KdpB and KdpC.

It is found in the cell inner membrane. Functionally, part of the high-affinity ATP-driven potassium transport (or Kdp) system, which catalyzes the hydrolysis of ATP coupled with the electrogenic transport of potassium into the cytoplasm. This subunit binds the periplasmic potassium ions and delivers the ions to the membrane domain of KdpB through an intramembrane tunnel. The chain is Potassium-transporting ATPase potassium-binding subunit from Escherichia coli (strain SMS-3-5 / SECEC).